The chain runs to 364 residues: Methylenetetrahydrofolate--tRNA-(uracil-5-)-methyltransferase TrmFO (364 aa).

11–16 (GAGLAG) contributes to the FAD binding site. A compositionally biased stretch (polar residues) spans 335–352 (SYLNQPCSSANDPTSSLL). The segment at 335–364 (SYLNQPCSSANDPTSSLLDRSPAQRDIPLQ) is disordered.

Belongs to the MnmG family. TrmFO subfamily. Requires FAD as cofactor.

It is found in the cytoplasm. The enzyme catalyses uridine(54) in tRNA + (6R)-5,10-methylene-5,6,7,8-tetrahydrofolate + NADH + H(+) = 5-methyluridine(54) in tRNA + (6S)-5,6,7,8-tetrahydrofolate + NAD(+). It catalyses the reaction uridine(54) in tRNA + (6R)-5,10-methylene-5,6,7,8-tetrahydrofolate + NADPH + H(+) = 5-methyluridine(54) in tRNA + (6S)-5,6,7,8-tetrahydrofolate + NADP(+). Catalyzes the folate-dependent formation of 5-methyl-uridine at position 54 (M-5-U54) in all tRNAs. This is Methylenetetrahydrofolate--tRNA-(uracil-5-)-methyltransferase TrmFO from Prochlorococcus marinus (strain MIT 9313).